Here is a 1593-residue protein sequence, read N- to C-terminus: ABC transporter C family member 8 (1593 aa).

The next 10 membrane-spanning stretches (helical) occupy residues 27–47 (VVMT…LYYL), 75–95 (VIVS…IVSI), 100–120 (FEIL…GLVY), 135–155 (LYWV…TLAI), 169–189 (FSYF…VLFF), 280–300 (FYIA…GPTL), 318–338 (YDGL…SLLL), 392–412 (LCPY…SLVL), 419–439 (ASVF…LAIS), and 505–525 (LLLW…VYIL). The ABC transmembrane type-1 1 domain occupies 280–561 (FYIAALFKII…LPSVVSSIIE (282 aa)). The region spanning 594-818 (VKIDNATLEW…GSHFTELMSH (225 aa)) is the ABC transporter 1 domain. 627 to 634 (GQVGSGKS) provides a ligand contact to ATP. The disordered stretch occupies residues 816–938 (MSHDEQQQQL…PLQKGEKSSV (123 aa)). Residues 844-875 (GDNKESENNEEQNEEEEGENENLLEKVLRKSR) adopt a coiled-coil conformation. Acidic residues predominate over residues 851–865 (NNEEQNEEEEGENEN). Residues 877-886 (RSPSPSSNRN) are compositionally biased toward low complexity. The segment covering 905–922 (EEDEQDERELMEDIDIDG) has biased composition (acidic residues). A run of 5 helical transmembrane segments spans residues 1005–1025 (IGVL…LLSI), 1064–1084 (AKYY…ATFL), 1157–1177 (IIVI…VGAL), 1251–1271 (LAIR…LYTV), and 1280–1300 (GTAG…NWMV). The ABC transmembrane type-1 2 domain occupies 1010 to 1308 (ATCIIGFYVL…MVRMSCDLEN (299 aa)). The ABC transporter 2 domain occupies 1344 to 1578 (IVFKNLWLTY…QDSIYYSLVK (235 aa)). 1378–1385 (GRTGAGKS) contributes to the ATP binding site.

This sequence belongs to the ABC transporter superfamily. ABCC family. Conjugate transporter (TC 3.A.1.208) subfamily.

Its subcellular location is the membrane. The chain is ABC transporter C family member 8 (abcC8) from Dictyostelium discoideum (Social amoeba).